We begin with the raw amino-acid sequence, 78 residues long: Large ribosomal subunit protein bL28 (78 aa).

Residues M1–H20 form a disordered region.

This sequence belongs to the bacterial ribosomal protein bL28 family.

This is Large ribosomal subunit protein bL28 from Actinobacillus succinogenes (strain ATCC 55618 / DSM 22257 / CCUG 43843 / 130Z).